The chain runs to 1578 residues: FH1/FH2 domain-containing protein 3 (1578 aa).

Positions 18 to 405 (NSTNFPEPSR…DLCEKDEEEE (388 aa)) constitute a GBD/FH3 domain. Disordered stretches follow at residues 324-518 (HEDG…DKLP), 535-824 (SPLL…GVNG), 915-942 (VGRGAISPDVESQDKVPDTPPAQLKTES), 979-1013 (LGHREAPGPPPPPPPTFLGLPPPPPPPLLDSVPPP), 1418-1462 (QQKQ…YAED), 1490-1514 (RTRSRASRGSTSSWTMGTEESPSVT), and 1528-1565 (SATQVPSQRVVPRERKRSRANRKSLRRTLKSGLTPEEA). Phosphoserine is present on residues serine 345 and serine 376. Positions 368-383 (IQNIKSPLSAPTSPCS) are enriched in polar residues. Over residues 399–425 (EKDEEEEEEEEQPITEPNSEEEREDDA) the composition is skewed to acidic residues. Threonine 413 carries the post-translational modification Phosphothreonine. A compositionally biased stretch (low complexity) spans 434 to 446 (ASSASGQSSPGKD). A compositionally biased stretch (polar residues) spans 453-473 (ALHTTSSPTSQGRWLSASTAA). Low complexity predominate over residues 553 to 583 (SNFSSNSFQSSRPSPGPSGSPSYASSFSSPQ). A compositionally biased stretch (polar residues) spans 584 to 598 (DTRSSPSGLLTSSFR). Residues 597 to 645 (FRQHQESLAAERERRRQEREERLQRIEREERNKFNREYLDKREEQRQAR) adopt a coiled-coil conformation. Over residues 599 to 651 (QHQESLAAERERRRQEREERLQRIEREERNKFNREYLDKREEQRQARGERYKY) the composition is skewed to basic and acidic residues. Low complexity-rich tracts occupy residues 675–684 (DLSLDLSLPA) and 692–701 (SSQSPSADSQ). The segment covering 751–761 (SQEEPVLELEP) has biased composition (acidic residues). Basic and acidic residues predominate over residues 762–782 (EERASLSEKERQNEEVNERDN). The segment covering 784–793 (SASSISSSSS) has biased composition (low complexity). Basic and acidic residues predominate over residues 795–809 (LEREEKEDKLSEDRA). The residue at position 921 (serine 921) is a Phosphoserine. Position 933 is a phosphothreonine (threonine 933). Positions 985–1013 (PGPPPPPPPTFLGLPPPPPPPLLDSVPPP) are enriched in pro residues. Residues 985–1016 (PGPPPPPPPTFLGLPPPPPPPLLDSVPPPPVP) enclose the FH1 domain. An FH2 domain is found at 1039-1435 (GQPAFTKKKK…HRERNKTRGK (397 aa)). Residues 1420-1434 (KQKRANHRERNKTRG) are compositionally biased toward basic residues. Residues 1444 to 1456 (SGSSPAAPSQPQG) show a composition bias toward low complexity. A DAD domain is found at 1515 to 1547 (DDAADEIMDRIVKSATQVPSQRVVPRERKRSRA). Basic residues predominate over residues 1541–1556 (ERKRSRANRKSLRRTL).

Belongs to the formin homology family. As to quaternary structure, interacts with nestin/NES-based interfilament (IF). Interacts with SQSTM1. In terms of tissue distribution, expressed in the heart, including left ventricle, kidney, brain and skeletal muscle, including soleus and tibialis anterior (at protein level).

Its subcellular location is the cytoplasm. It localises to the cytoskeleton. The protein localises to the myofibril. It is found in the sarcomere. The protein resides in the z line. Its function is as follows. May play a role in actin filament polymerization in cardiomyocytes. Actin-organizing protein that may cause stress fiber formation together with cell elongation. This is FH1/FH2 domain-containing protein 3 (Fhod3) from Mus musculus (Mouse).